We begin with the raw amino-acid sequence, 48 residues long: Phosphatidylserine decarboxylase proenzyme (48 aa).

Belongs to the phosphatidylserine decarboxylase family. Type 1 subfamily. It depends on pyruvate as a cofactor.

It catalyses the reaction a 1,2-diacyl-sn-glycero-3-phospho-L-serine + H(+) = a 1,2-diacyl-sn-glycero-3-phosphoethanolamine + CO2. It participates in phospholipid metabolism; phosphatidylethanolamine biosynthesis; phosphatidylethanolamine from CDP-diacylglycerol: step 2/2. This is Phosphatidylserine decarboxylase proenzyme (psd) from Azotobacter vinelandii.